We begin with the raw amino-acid sequence, 368 residues long: Phospho-N-acetylmuramoyl-pentapeptide-transferase (368 aa).

9 consecutive transmembrane segments (helical) span residues 30 to 50 (AAAI…IRYL), 72 to 92 (LPTM…FLWA), 98 to 118 (HVWL…IDDY), 139 to 159 (ISLG…AVLL), 170 to 190 (LSID…TAVS), 201 to 221 (GLAS…SYLA), 238 to 258 (GGEI…FLWF), 264 to 286 (EIIM…ALLI), and 345 to 365 (KIVI…LMTL).

The protein belongs to the glycosyltransferase 4 family. MraY subfamily. Mg(2+) is required as a cofactor.

It is found in the cell inner membrane. It catalyses the reaction UDP-N-acetyl-alpha-D-muramoyl-L-alanyl-gamma-D-glutamyl-meso-2,6-diaminopimeloyl-D-alanyl-D-alanine + di-trans,octa-cis-undecaprenyl phosphate = di-trans,octa-cis-undecaprenyl diphospho-N-acetyl-alpha-D-muramoyl-L-alanyl-D-glutamyl-meso-2,6-diaminopimeloyl-D-alanyl-D-alanine + UMP. Its pathway is cell wall biogenesis; peptidoglycan biosynthesis. In terms of biological role, catalyzes the initial step of the lipid cycle reactions in the biosynthesis of the cell wall peptidoglycan: transfers peptidoglycan precursor phospho-MurNAc-pentapeptide from UDP-MurNAc-pentapeptide onto the lipid carrier undecaprenyl phosphate, yielding undecaprenyl-pyrophosphoryl-MurNAc-pentapeptide, known as lipid I. The chain is Phospho-N-acetylmuramoyl-pentapeptide-transferase from Chlorobium phaeobacteroides (strain DSM 266 / SMG 266 / 2430).